The chain runs to 500 residues: Serine carboxypeptidase 3 (500 aa).

The first 21 residues, 1–21, serve as a signal peptide directing secretion; sequence MATTPRLASLLLLLALCAAAA. The propeptide occupies 22–73; sequence GALRLPPDASFPGAQAERLIRALNLLPGRPRRGLGAGAEDVAPGQLLERRVT. 3 disulfide bridges follow: Cys126–Cys366, Cys294–Cys309, and Cys332–Cys337. A glycan (N-linked (GlcNAc...) asparagine) is linked at Asn144. Ser216 is a catalytic residue. Residue Asp404 is part of the active site. Cys407 is a binding site for substrate. His461 is a catalytic residue. The propeptide occupies 485-500; that stretch reads ESVPEEEPATTFYAAI.

Belongs to the peptidase S10 family. As to quaternary structure, monomer.

It carries out the reaction Release of a C-terminal amino acid with broad specificity.. The protein is Serine carboxypeptidase 3 (CBP3) of Triticum aestivum (Wheat).